A 434-amino-acid chain; its full sequence is Cullin-like protein 5 (434 aa).

The interval 1–34 (MKRSISPDPFSSTKSPKLVHHSPDDGGAEGNPYR) is disordered.

It belongs to the cullin family.

The chain is Cullin-like protein 5 from Arabidopsis thaliana (Mouse-ear cress).